The following is a 520-amino-acid chain: Cyclic AMP-responsive element-binding protein 3-like protein 2 (520 aa).

The Cytoplasmic segment spans residues 1–379 (MEVLESGEQG…KLAGTQTGTC (379 aa)). Phosphoserine is present on Ser-93. Lys-178 participates in a covalent cross-link: Glycyl lysine isopeptide (Lys-Gly) (interchain with G-Cter in SUMO2). Ser-191 bears the Phosphoserine mark. Residues 195 to 264 (APVDHLHLPP…PHKLQGSGPL (70 aa)) are disordered. Composition is skewed to low complexity over residues 208–220 (SSHG…SLSP) and 234–255 (SPSR…LTAP). A bZIP domain is found at 294-357 (ALKKIRRKIK…RTLLQQLQKL (64 aa)). The interval 296 to 325 (KKIRRKIKNKISAQESRRKKKEYMDSLEKK) is basic motif. The leucine-zipper stretch occupies residues 336–357 (LRKKVEVLENTNRTLLQQLQKL). A helical; Signal-anchor for type II membrane protein transmembrane segment spans residues 380–400 (LMVVVLCFAVAFGSFFQGYGP). The Lumenal segment spans residues 401–520 (YPSATKMALP…ELDRRVNTTF (120 aa)). The short motif at 427-430 (RNLL) is the S1P recognition element. 3 N-linked (GlcNAc...) asparagine glycosylation sites follow: Asn-480, Asn-504, and Asn-517.

It belongs to the bZIP family. ATF subfamily. Binds DNA as a dimer. Post-translationally, upon ER stress, translocated to the Golgi apparatus, where it is processed by regulated intramembrane proteolysis (RIP) to release the cytosol-facing N-terminal transcription factor domain. The cleavage is performed sequentially by site-1 and site-2 proteases (S1P/MBTPS1 and S2P/MBTPS2). In terms of processing, N-glycosylated. Ubiquitinated by HRD1/SYVN1; undergoes 'Lys-48'-linked ubiquitination, followed by rapid proteasomal degradation under normal conditions. Upon ER stress, SYVN1 E3 ubiquitin-protein ligase dissociates from its substrate, ubiquitination does not occur and CREB3L2 is stabilized. Widely expressed with highest levels in placenta, lung, spleen and intestine, and lowest levels in heart, brain, skeletal muscle, thymus, colon and leukocytes. In fetal tissues, the weakest expression is detected in brain and heart.

It is found in the endoplasmic reticulum membrane. The protein resides in the nucleus. In terms of biological role, transcription factor involved in unfolded protein response (UPR). In the absence of endoplasmic reticulum (ER) stress, inserted into ER membranes, with N-terminal DNA-binding and transcription activation domains oriented toward the cytosolic face of the membrane. In response to ER stress, transported to the Golgi, where it is cleaved in a site-specific manner by resident proteases S1P/MBTPS1 and S2P/MBTPS2. The released N-terminal cytosolic domain is translocated to the nucleus to effect transcription of specific target genes. Plays a critical role in chondrogenesis by activating the transcription of SEC23A, which promotes the transport and secretion of cartilage matrix proteins, and possibly that of ER biogenesis-related genes. In a neuroblastoma cell line, protects cells from ER stress-induced death. In vitro activates transcription of target genes via direct binding to the CRE site. This Homo sapiens (Human) protein is Cyclic AMP-responsive element-binding protein 3-like protein 2 (CREB3L2).